The following is a 400-amino-acid chain: Putative transposase for insertion sequence element IS5376 (400 aa).

Residues 5–67 (GEFFMIKEMY…PFKPYLQKRM (63 aa)) enclose the HTH IS21-type domain. The segment at residues 20–39 (ISDIARELGIDRKTVRKYIH) is a DNA-binding region (H-T-H motif). A disordered region spans residues 35 to 55 (RKYIHSPNPPSKSKRKQRKSK). An Integrase catalytic domain is found at 113–287 (YETLPGEQMQ…SPQERWAEES (175 aa)).

This sequence belongs to the transposase IS21/IS408/IS1162 family.

Functionally, involved in the transposition of the insertion sequence. This Geobacillus stearothermophilus (Bacillus stearothermophilus) protein is Putative transposase for insertion sequence element IS5376.